A 351-amino-acid chain; its full sequence is UDP-N-acetylenolpyruvoylglucosamine reductase (351 aa).

An FAD-binding PCMH-type domain is found at 11 to 213 (GVGGSIACFI…KQVRDQVLRI (203 aa)). The active site involves Arg158. The active-site Proton donor is Ser239. The active site involves Glu343.

This sequence belongs to the MurB family. The cofactor is FAD.

It localises to the cytoplasm. It carries out the reaction UDP-N-acetyl-alpha-D-muramate + NADP(+) = UDP-N-acetyl-3-O-(1-carboxyvinyl)-alpha-D-glucosamine + NADPH + H(+). Its pathway is cell wall biogenesis; peptidoglycan biosynthesis. Its function is as follows. Cell wall formation. The chain is UDP-N-acetylenolpyruvoylglucosamine reductase from Tropheryma whipplei (strain Twist) (Whipple's bacillus).